Reading from the N-terminus, the 224-residue chain is tRNA (guanine-N(7)-)-methyltransferase (224 aa).

The S-adenosyl-L-methionine site is built by Glu57, Asp82, and Asp109. Asp167 contacts substrate.

Belongs to the class I-like SAM-binding methyltransferase superfamily. TrmB family.

The enzyme catalyses guanosine(46) in tRNA + S-adenosyl-L-methionine = N(7)-methylguanosine(46) in tRNA + S-adenosyl-L-homocysteine. It participates in tRNA modification; N(7)-methylguanine-tRNA biosynthesis. In terms of biological role, catalyzes the formation of N(7)-methylguanine at position 46 (m7G46) in tRNA. The polypeptide is tRNA (guanine-N(7)-)-methyltransferase (Chloroflexus aggregans (strain MD-66 / DSM 9485)).